A 38-amino-acid chain; its full sequence is Photosystem II reaction center protein L (38 aa).

Residues 17–37 (SLFWGLLLIFVLAILFSNYFF) form a helical membrane-spanning segment.

Belongs to the PsbL family. PSII is composed of 1 copy each of membrane proteins PsbA, PsbB, PsbC, PsbD, PsbE, PsbF, PsbH, PsbI, PsbJ, PsbK, PsbL, PsbM, PsbT, PsbX, PsbY, PsbZ, Psb30/Ycf12, at least 3 peripheral proteins of the oxygen-evolving complex and a large number of cofactors. It forms dimeric complexes.

Its subcellular location is the plastid. The protein resides in the chloroplast thylakoid membrane. In terms of biological role, one of the components of the core complex of photosystem II (PSII). PSII is a light-driven water:plastoquinone oxidoreductase that uses light energy to abstract electrons from H(2)O, generating O(2) and a proton gradient subsequently used for ATP formation. It consists of a core antenna complex that captures photons, and an electron transfer chain that converts photonic excitation into a charge separation. This subunit is found at the monomer-monomer interface and is required for correct PSII assembly and/or dimerization. The protein is Photosystem II reaction center protein L of Chara vulgaris (Common stonewort).